The primary structure comprises 527 residues: Baeyer-Villiger monooxygenase (527 aa).

Residues S36, E56, 64–67 (TWRV), D76, Y82, and I125 contribute to the FAD site. 74 to 76 (ACD) contributes to the NADP(+) binding site. NADP(+)-binding positions include 199 to 205 (TGASAIQ), 222 to 223 (RT), and 308 to 309 (KR). M415 provides a ligand contact to FAD.

Belongs to the FAD-binding monooxygenase family. Requires FAD as cofactor.

Catalyzes a Baeyer-Villiger oxidation reaction, i.e. the insertion of an oxygen atom into a carbon-carbon bond adjacent to a carbonyl, which converts ketones to esters or lactones using NADPH and/or NADH as an electron donor. Thus, can convert bicyclo[3.2.0]hept-2-en-6-one into the oxidative lactone products 2-oxabicyclo[3.3.0]oct-6-en-3-one and 3-oxabicyclo[3.3.0]oct-6-en-2-one. Is also able to catalyze the sulfoxidation of methyl phenyl sulfide (thioanisole). The polypeptide is Baeyer-Villiger monooxygenase (Pseudomonas aeruginosa (strain ATCC 15692 / DSM 22644 / CIP 104116 / JCM 14847 / LMG 12228 / 1C / PRS 101 / PAO1)).